The chain runs to 169 residues: Nucleoside diphosphate kinase 3 (169 aa).

ADP-binding residues include Lys-29, Arg-105, Thr-111, Arg-122, Val-129, and Asn-132. The Pros-phosphohistidine intermediate role is filled by His-135.

It belongs to the NDK family. As to quaternary structure, homohexamer. Mg(2+) is required as a cofactor.

The protein resides in the mitochondrion outer membrane. It localises to the cytoplasm. The protein localises to the cytoskeleton. It is found in the cilium basal body. The catalysed reaction is a 2'-deoxyribonucleoside 5'-diphosphate + ATP = a 2'-deoxyribonucleoside 5'-triphosphate + ADP. The enzyme catalyses a ribonucleoside 5'-diphosphate + ATP = a ribonucleoside 5'-triphosphate + ADP. Functionally, catalyzes the phosphorylation of ribonucleosides and deoxyribonucleoside diphosphates, other than ATP, into the corresponding triphosphates with ATP as the major phosphate donor. The ATP gamma phosphate is transferred to the nucleoside diphosphate beta phosphate via a ping-pong mechanism, using a phosphorylated active-site intermediate. Through the catalyzed exchange of gamma-phosphate between di- and triphosphonucleosides participates in regulation of intracellular nucleotide homeostasis. Required for ciliary function during renal development. Independently of its kinase activity, facilitates mitochondrial tethering prior to membrane fusion through its direct membrane-binding and hexamerization. Implicated in repair of both single- and double-stranded breaks in DNA, independently of its kinase activity. In Danio rerio (Zebrafish), this protein is Nucleoside diphosphate kinase 3.